The following is a 565-amino-acid chain: Hemagglutinin-neuraminidase (565 aa).

At 1-19 the chain is on the intravirion side; the sequence is MVAEDAPVRATCRVLFRTT. A helical membrane pass occupies residues 20–40; the sequence is TLIFLCTLLALSISILYESLI. The Virion surface portion of the chain corresponds to 41–565; the sequence is TQKQIMSQAG…VPFIRQVTLS (525 aa). A glycan (N-linked (GlcNAc...) asparagine; by host) is linked at Asn139. Intrachain disulfides connect Cys161–Cys185, Cys175–Cys236, and Cys227–Cys240. The interval 223-228 is involved in neuraminidase activity; that stretch reads NRKSCS. Asn267 carries N-linked (GlcNAc...) asparagine; by host glycosylation. 3 disulfides stabilise this stretch: Cys333–Cys454, Cys365–Cys375, and Cys448–Cys458. An N-linked (GlcNAc...) asparagine; by host glycan is attached at Asn504. Cysteines 528 and 539 form a disulfide.

The protein belongs to the paramyxoviruses hemagglutinin-neuraminidase family. Homotetramer; composed of disulfide-linked homodimers. Interacts with F protein trimer.

Its subcellular location is the virion membrane. It is found in the host cell membrane. It carries out the reaction Hydrolysis of alpha-(2-&gt;3)-, alpha-(2-&gt;6)-, alpha-(2-&gt;8)- glycosidic linkages of terminal sialic acid residues in oligosaccharides, glycoproteins, glycolipids, colominic acid and synthetic substrates.. In terms of biological role, attaches the virus to sialic acid-containing cell receptors and thereby initiating infection. Binding of HN protein to the receptor induces a conformational change that allows the F protein to trigger virion/cell membranes fusion. Neuraminidase activity ensures the efficient spread of the virus by dissociating the mature virions from the neuraminic acid containing glycoproteins. This chain is Hemagglutinin-neuraminidase (HN), found in Canis lupus familiaris (Dog).